The chain runs to 281 residues: Secretory carrier-associated membrane protein 5 (281 aa).

Residues 1-49 (MHHDPNPFDEGADDNPFSNGGGGGARRGGGGGGGGGGGGGKSQFSFGFG) form a disordered region. Over 1 to 139 (MHHDPNPFDE…AQKLQYLAFA (139 aa)) the chain is Cytoplasmic. Positions 19–49 (NGGGGGARRGGGGGGGGGGGGGKSQFSFGFG) are enriched in gly residues. A coiled-coil region spans residues 76–102 (KELLQWEADLKRREADIRRREEALKSA). The next 4 helical transmembrane spans lie at 140-160 (SWLG…VCWI), 167-187 (LFFL…LMWY), 202-222 (FGWF…AAIA), and 250-270 (IFYF…IWVL). The Cytoplasmic segment spans residues 271–281 (QKVYMYFRGHK).

Belongs to the SCAMP family.

Its subcellular location is the cell membrane. It localises to the cytoplasmic vesicle. The protein resides in the secretory vesicle membrane. Functionally, probably involved in membrane trafficking. In Oryza sativa subsp. japonica (Rice), this protein is Secretory carrier-associated membrane protein 5 (SCAMP5).